Reading from the N-terminus, the 258-residue chain is Pro-thyrotropin-releasing hormone-A (258 aa).

The first 22 residues, 1–22, serve as a signal peptide directing secretion; that stretch reads MKSACLIILASLVVCNLTLARG. Position 78 is a pyrrolidone carboxylic acid (Gln78). At Pro80 the chain carries Proline amide. Composition is skewed to basic and acidic residues over residues 84–98 and 107–119; these read YQEE…GKRE and EVQK…KRED. Residues 84 to 124 are disordered; it reads YQEELEKRQHPGKREEDEDEDYDEVQKRQHPGKREDEFDSF. Gln92 is modified (pyrrolidone carboxylic acid). Pro94 bears the Proline amide mark. Residue Gln112 is modified to Pyrrolidone carboxylic acid. At Pro114 the chain carries Proline amide. Position 131 is a pyrrolidone carboxylic acid (Gln131). A Proline amide modification is found at Pro133. A Pyrrolidone carboxylic acid modification is found at Gln156. Position 158 is a proline amide (Pro158). 2 disordered regions span residues 166 to 215 and 236 to 258; these read YSKR…PCDV and SRAE…TEQE. Gln170 carries the post-translational modification Pyrrolidone carboxylic acid. Pro172 is modified (proline amide). The span at 184 to 193 shows a compositional bias: basic and acidic residues; it reads GDLRELEKRQ. Gln193 carries the pyrrolidone carboxylic acid modification. Pro195 is subject to Proline amide. Pyrrolidone carboxylic acid is present on Gln242. Position 244 is a proline amide (Pro244).

This sequence belongs to the TRH family.

The protein resides in the secreted. Its function is as follows. Functions as a regulator of the biosynthesis of TSH in the anterior pituitary gland and as a neurotransmitter/ neuromodulator in the central and peripheral nervous systems. The sequence is that of Pro-thyrotropin-releasing hormone-A (trha) from Oncorhynchus nerka (Sockeye salmon).